Here is a 323-residue protein sequence, read N- to C-terminus: tRNA U34 carboxymethyltransferase (323 aa).

Carboxy-S-adenosyl-L-methionine-binding positions include Lys-91, Trp-105, Lys-110, Gly-130, 152–154, 181–182, Met-196, Tyr-200, and Arg-315; these read DPS and IE.

The protein belongs to the class I-like SAM-binding methyltransferase superfamily. CmoB family. As to quaternary structure, homotetramer.

It carries out the reaction carboxy-S-adenosyl-L-methionine + 5-hydroxyuridine(34) in tRNA = 5-carboxymethoxyuridine(34) in tRNA + S-adenosyl-L-homocysteine + H(+). Catalyzes carboxymethyl transfer from carboxy-S-adenosyl-L-methionine (Cx-SAM) to 5-hydroxyuridine (ho5U) to form 5-carboxymethoxyuridine (cmo5U) at position 34 in tRNAs. The protein is tRNA U34 carboxymethyltransferase of Vibrio cholerae serotype O1 (strain ATCC 39541 / Classical Ogawa 395 / O395).